The chain runs to 136 residues: ATP synthase epsilon chain (136 aa).

Belongs to the ATPase epsilon chain family. In terms of assembly, F-type ATPases have 2 components, CF(1) - the catalytic core - and CF(0) - the membrane proton channel. CF(1) has five subunits: alpha(3), beta(3), gamma(1), delta(1), epsilon(1). CF(0) has three main subunits: a, b and c.

The protein localises to the cellular thylakoid membrane. Produces ATP from ADP in the presence of a proton gradient across the membrane. This is ATP synthase epsilon chain (atpC) from Prochloron didemni.